The following is a 324-amino-acid chain: Muscleblind-like protein (324 aa).

2 consecutive C3H1-type zinc fingers follow at residues 38–66 and 72–100; these read WLQV…HPPP and QGRV…HPPQ.

This sequence belongs to the muscleblind family. In terms of tissue distribution, expressed in neurons around the pharynx.

It is found in the nucleus. Functionally, binds to RNA with repeat sequences 5'-CUG-3' and 5'-CCUG-3'. In Caenorhabditis elegans, this protein is Muscleblind-like protein (mbl-1).